Consider the following 253-residue polypeptide: 3-isopropylmalate dehydratase small subunit 3 (253 aa).

A chloroplast-targeting transit peptide spans 1–56 (MATSQQFLNPTLFKSLASSNKNSCTLCPSPFLQLKSASTIFNYKPLTSSSATIITR).

It belongs to the LeuD family. In terms of assembly, heterodimer of the large LEUC/IIL1 subunit and the small LEUD (SSU1, SSU2 or SSU3) subunits. Expressed in vascular bundles of roots, cotyledons and rosette leaves. Expressed in stem vascular bundles which branche off into lateral inflorescences. Expressed in connective tissues in anthers. In hypocotyls, expressed in parenchyma cells surrounding the vasculature. In rosette leaves, expressed in phloem cells and cells close to the xylem along the vascular bundles. In roots of adult plants, expressed in cells closely associated with the stele. In flowering stalks, expressed in parenchyma cells associated with the phloem or the xylem.

Its subcellular location is the plastid. It is found in the chloroplast stroma. It carries out the reaction (2R,3S)-3-isopropylmalate = (2S)-2-isopropylmalate. The catalysed reaction is a 2-(omega-methylsulfanyl)alkylmalate = a 2-(omega-methylsulfanyl)alkylmaleate + H2O. The enzyme catalyses 2-(3-methylsulfanyl)propylmalate = 2-(2-methylsulfanyl)propylmaleate + H2O. It catalyses the reaction a 3-(omega-methylsulfanyl)alkylmalate = a 2-(omega-methylsulfanyl)alkylmaleate + H2O. It carries out the reaction 2-(2-methylsulfanyl)ethylmalate = 2-(2-methylsulfanyl)ethylmaleate + H2O. The catalysed reaction is 3-(2-methylsulfanyl)ethylmalate = 2-(2-methylsulfanyl)ethylmaleate + H2O. The enzyme catalyses 3-(3-methylsulfanyl)propylmalate = 2-(2-methylsulfanyl)propylmaleate + H2O. The protein operates within amino-acid biosynthesis; L-leucine biosynthesis; L-leucine from 3-methyl-2-oxobutanoate: step 2/4. Functionally, catalyzes the isomerization between 2-isopropylmalate and 3-isopropylmalate, via the formation of 2-isopropylmaleate. Functions redundantly with LEUD1 in the methionine chain elongation pathway of aliphatic glucosinolate formation. This chain is 3-isopropylmalate dehydratase small subunit 3, found in Arabidopsis thaliana (Mouse-ear cress).